The sequence spans 214 residues: Ribosomal RNA small subunit methyltransferase G (214 aa).

S-adenosyl-L-methionine-binding positions include Gly77, Leu82, 128 to 129 (VE), and Arg143.

This sequence belongs to the methyltransferase superfamily. RNA methyltransferase RsmG family.

Its subcellular location is the cytoplasm. The catalysed reaction is guanosine(527) in 16S rRNA + S-adenosyl-L-methionine = N(7)-methylguanosine(527) in 16S rRNA + S-adenosyl-L-homocysteine. In terms of biological role, specifically methylates the N7 position of guanine in position 527 of 16S rRNA. The polypeptide is Ribosomal RNA small subunit methyltransferase G (Nitrosococcus oceani (strain ATCC 19707 / BCRC 17464 / JCM 30415 / NCIMB 11848 / C-107)).